The primary structure comprises 43 residues: Photosystem II reaction center protein Y (43 aa).

The chain crosses the membrane as a helical span at residues 8-26 (LFLVVAPILAAVSWAAFNI).

This sequence belongs to the PsbY family. PSII is composed of 1 copy each of membrane proteins PsbA, PsbB, PsbC, PsbD, PsbE, PsbF, PsbH, PsbI, PsbJ, PsbK, PsbL, PsbM, PsbT, PsbX, PsbY, PsbZ, Psb30/Ycf12, peripheral proteins PsbO, CyanoQ (PsbQ), PsbU, PsbV and a large number of cofactors. It forms dimeric complexes.

The protein resides in the cellular thylakoid membrane. In terms of biological role, loosely associated component of the core of photosystem II (PSII), it is not always seen in crystals. PSII is a light-driven water plastoquinone oxidoreductase, using light energy to abstract electrons from H(2)O, generating a proton gradient subsequently used for ATP formation. The protein is Photosystem II reaction center protein Y of Parasynechococcus marenigrum (strain WH8102).